The chain runs to 278 residues: ATP synthase subunit delta (278 aa).

The protein belongs to the ATPase delta chain family. F-type ATPases have 2 components, F(1) - the catalytic core - and F(0) - the membrane proton channel. F(1) has five subunits: alpha(3), beta(3), gamma(1), delta(1), epsilon(1). F(0) has three main subunits: a(1), b(2) and c(10-14). The alpha and beta chains form an alternating ring which encloses part of the gamma chain. F(1) is attached to F(0) by a central stalk formed by the gamma and epsilon chains, while a peripheral stalk is formed by the delta and b chains.

It localises to the cell membrane. In terms of biological role, f(1)F(0) ATP synthase produces ATP from ADP in the presence of a proton or sodium gradient. F-type ATPases consist of two structural domains, F(1) containing the extramembraneous catalytic core and F(0) containing the membrane proton channel, linked together by a central stalk and a peripheral stalk. During catalysis, ATP synthesis in the catalytic domain of F(1) is coupled via a rotary mechanism of the central stalk subunits to proton translocation. Its function is as follows. This protein is part of the stalk that links CF(0) to CF(1). It either transmits conformational changes from CF(0) to CF(1) or is implicated in proton conduction. The polypeptide is ATP synthase subunit delta (Bifidobacterium longum (strain DJO10A)).